Here is a 505-residue protein sequence, read N- to C-terminus: Trans-cinnamate 4-monooxygenase (505 aa).

Residues 3 to 23 form a helical membrane-spanning segment; that stretch reads LLLVEKTLLALFAAIIASIFI. Residues 213–218 and alanine 306 contribute to the (E)-cinnamate site; that span reads RSRLAQ. Heme is bound at residue cysteine 447.

Belongs to the cytochrome P450 family. The cofactor is heme.

It localises to the membrane. The catalysed reaction is (E)-cinnamate + reduced [NADPH--hemoprotein reductase] + O2 = (E)-4-coumarate + oxidized [NADPH--hemoprotein reductase] + H2O + H(+). It participates in phenylpropanoid metabolism; trans-4-coumarate biosynthesis; trans-4-coumarate from trans-cinnamate: step 1/1. Its function is as follows. Catalyzes the first oxidative step of the phenylpropanoid pathway in higher plants by transforming trans-cinnamate into p-coumarate. The compounds formed by this pathway are essential components for lignification, pollination, and defense against ultraviolet light, predators and pathogens. The chain is Trans-cinnamate 4-monooxygenase (CYP73A12) from Zinnia elegans (Garden zinnia).